The chain runs to 36 residues: Photosystem I reaction center subunit VIII (36 aa).

The helical transmembrane segment at 7-29 threads the bilayer; that stretch reads PSILVPLVGLVFPAITLASLFIY.

Belongs to the PsaI family.

The protein resides in the plastid. The protein localises to the chloroplast thylakoid membrane. Its function is as follows. May help in the organization of the PsaL subunit. The sequence is that of Photosystem I reaction center subunit VIII from Anthoceros angustus (Hornwort).